The primary structure comprises 247 residues: Ras-like protein family member 11B (247 aa).

Positions 29–247 are small GTPase-like; that stretch reads ASSRVIKIAV…SAKVRTATSV (219 aa). Residues 40 to 47, 87 to 91, and 152 to 155 contribute to the GTP site; these read GGSGVGKT, DTPGV, and NKAD. The segment at 205-228 is disordered; the sequence is QNTGTPERRKNSLIPRPKSPNMQD.

It belongs to the small GTPase superfamily. Ras family.

It catalyses the reaction GTP + H2O = GDP + phosphate + H(+). The protein is Ras-like protein family member 11B of Xenopus tropicalis (Western clawed frog).